Here is a 476-residue protein sequence, read N- to C-terminus: Eukaryotic translation initiation factor 3 subunit L (476 aa).

Residues 257-452 (DAIRMFSHIL…DLDYALENDL (196 aa)) enclose the PCI domain.

Belongs to the eIF-3 subunit L family. In terms of assembly, component of the eukaryotic translation initiation factor 3 (eIF-3) complex.

It is found in the cytoplasm. Functionally, component of the eukaryotic translation initiation factor 3 (eIF-3) complex, which is involved in protein synthesis of a specialized repertoire of mRNAs and, together with other initiation factors, stimulates binding of mRNA and methionyl-tRNAi to the 40S ribosome. The eIF-3 complex specifically targets and initiates translation of a subset of mRNAs involved in cell proliferation. This chain is Eukaryotic translation initiation factor 3 subunit L, found in Neosartorya fischeri (strain ATCC 1020 / DSM 3700 / CBS 544.65 / FGSC A1164 / JCM 1740 / NRRL 181 / WB 181) (Aspergillus fischerianus).